A 328-amino-acid polypeptide reads, in one-letter code: P2Y purinoceptor 6 (328 aa).

Residues 1-27 (MEQDNGTIQAPGLPPTTCVYREDFKRL) lie on the Extracellular side of the membrane. Residue Asn-5 is glycosylated (N-linked (GlcNAc...) asparagine). The chain crosses the membrane as a helical span at residues 28–48 (LLTPVYSVVLVVGLPLNICVI). Residues 49–62 (AQICASRRTLTRSA) lie on the Cytoplasmic side of the membrane. A helical transmembrane segment spans residues 63–83 (VYTLNLALADLMYACSLPLLI). The Extracellular segment spans residues 84-101 (YNYARGDHWPFGDLACRF). A disulfide bridge links Cys-99 with Cys-177. A helical membrane pass occupies residues 102 to 122 (VRFLFYANLHGSILFLTCISF). Topologically, residues 123 to 144 (QRYLGICHPLASWHKRGGRRAA) are cytoplasmic. Residues 145–165 (WVVCGVVWLAVTAQCLPTAVF) traverse the membrane as a helical segment. At 166–194 (AATGIQRNRTVCYDLSPPILSTRYLPYGM) the chain is on the extracellular side. Asn-173 is a glycosylation site (N-linked (GlcNAc...) asparagine). A helical membrane pass occupies residues 195–215 (ALTVIGFLLPFIALLACYCRM). Over 216–236 (ARRLCRQDGPAGPVAQERRSK) the chain is Cytoplasmic. Residues 237–257 (AARMAVVVAAVFAISFLPFHI) form a helical membrane-spanning segment. Over 258 to 280 (TKTAYLAVRSTPGVSCPVLETFA) the chain is Extracellular. A helical membrane pass occupies residues 281–303 (AAYKGTRPFASVNSVLDPILFYF). The Cytoplasmic segment spans residues 304-328 (TQQKFRRQPHDLLQRLTAKWQRQRV).

The protein belongs to the G-protein coupled receptor 1 family.

The protein localises to the cell membrane. In terms of biological role, receptor for extracellular UTP &gt; ADP = 2-methylthio-ATP &gt; ADP-beta-S &gt; ATP = ATP-gamma-S. The activity of this receptor is mediated by G proteins which activate a phosphatidylinositol-calcium second messenger system. Functionally coupled to phospholipase C. The sequence is that of P2Y purinoceptor 6 (P2ry6) from Mus musculus (Mouse).